Consider the following 831-residue polypeptide: Periplasmic nitrate reductase (831 aa).

The segment at residues 1-29 (MKFTRREFMKAQAAASAAAVAGIALPATA) is a signal peptide (tat-type signal). A 4Fe-4S Mo/W bis-MGD-type domain is found at 41 to 97 (IKWEKAPCRFCGTGCSVLVGTQHGRVVATQGDPESPVNKGLNCVKGYFLSKIMYGKD). Residues Cys-48, Cys-51, Cys-55, and Cys-83 each contribute to the [4Fe-4S] cluster site. Mo-bis(molybdopterin guanine dinucleotide) contacts are provided by residues Lys-85, Gln-152, Asn-177, Cys-181, 214–221 (WGSNMAEM), 245–249 (STYTH), 264–266 (QSD), Met-374, Gln-378, Asn-484, 510–511 (SD), Lys-533, Asp-560, and 720–729 (TGRVLEHWHS). A substrate-binding site is contributed by Trp-796. Mo-bis(molybdopterin guanine dinucleotide)-binding residues include Asn-804 and Lys-821.

It belongs to the prokaryotic molybdopterin-containing oxidoreductase family. NasA/NapA/NarB subfamily. In terms of assembly, component of the periplasmic nitrate reductase NapAB complex composed of NapA and NapB. Requires [4Fe-4S] cluster as cofactor. It depends on Mo-bis(molybdopterin guanine dinucleotide) as a cofactor. In terms of processing, predicted to be exported by the Tat system. The position of the signal peptide cleavage has not been experimentally proven.

The protein localises to the periplasm. It catalyses the reaction 2 Fe(II)-[cytochrome] + nitrate + 2 H(+) = 2 Fe(III)-[cytochrome] + nitrite + H2O. In terms of biological role, catalytic subunit of the periplasmic nitrate reductase complex NapAB. Receives electrons from NapB and catalyzes the reduction of nitrate to nitrite. The polypeptide is Periplasmic nitrate reductase (Psychromonas ingrahamii (strain DSM 17664 / CCUG 51855 / 37)).